A 259-amino-acid polypeptide reads, in one-letter code: Probable iron export permease protein FetB (259 aa).

Over 1 to 5 the chain is Periplasmic; it reads MNSHN. A helical transmembrane segment spans residues 6 to 26; sequence ITNESLALALMLVVVAILISH. Over 27 to 35 the chain is Cytoplasmic; sequence KEKLALEKD. 2 helical membrane-spanning segments follow: residues 36–56 and 57–77; these read ILWSVGRAIIQLIIVGYVLKY and IFSVDDASLTLLMVLFICFNA. At 78–91 the chain is on the cytoplasmic side; sequence AWNAQKRSKYIAKA. The helical transmembrane segment at 92 to 112 threads the bilayer; sequence FISSFIAITVGAGITLAVLIL. Topologically, residues 113–117 are periplasmic; sequence SGSIE. A helical transmembrane segment spans residues 118–138; sequence FIPMQVIPIAGMIAGNAMVAV. At 139–191 the chain is on the cytoplasmic side; it reads GLCYNNLGQRVISEQQQIQEKLSLGATPKQASAILIRDSIRAALIPTVDSAKT. A helical transmembrane segment spans residues 192–212; that stretch reads VGLVSLPGMMSGLIFAGIDPV. Residues 213-218 are Periplasmic-facing; that stretch reads KAIKYQ. Residues 219–239 traverse the membrane as a helical segment; the sequence is IMVTFMLLSTASLSTIIACYL. Over 240–259 the chain is Cytoplasmic; it reads TYRKFYNSRHQLVVTQLKKK.

The protein belongs to the UPF0014 family. In terms of assembly, the complex is composed of two ATP-binding proteins (FetA) and two transmembrane proteins (FetB).

It is found in the cell inner membrane. Its function is as follows. Part of the ABC transporter complex FetAB, which is probably involved in iron export and enhances resistance to H(2)O(2)-mediated oxidative stress. Probably responsible for the translocation of the substrate across the membrane. The polypeptide is Probable iron export permease protein FetB (fetB) (Escherichia coli (strain K12)).